The following is an 871-amino-acid chain: Probable LRR receptor-like serine/threonine-protein kinase At1g51810 (871 aa).

Positions 1-20 (MERHCLFFVIFSLILHLVQA) are cleaved as a signal peptide. Over 21-512 (QDPIGFINLD…GRQIKSMTIP (492 aa)) the chain is Extracellular. 11 N-linked (GlcNAc...) asparagine glycosylation sites follow: Asn-93, Asn-179, Asn-229, Asn-283, Asn-295, Asn-396, Asn-410, Asn-439, Asn-458, Asn-463, and Asn-489. LRR repeat units follow at residues 405-426 (IITSLNLSSSGLTGIIVLTIQN), 429-449 (NLQELDLSNNNLSGGVPEFLA), and 453-474 (SLLVINLSGNNLSGVVPQKLIE). A helical membrane pass occupies residues 513 to 533 (IVASIGSVVAFTVALMIFCVV). Residues 534–871 (RKNNPSNDEA…FGTEVAPMAR (338 aa)) lie on the Cytoplasmic side of the membrane. Thr-568 carries the phosphothreonine modification. Residues 577–850 (NNFQKILGKG…QVVFELKECL (274 aa)) form the Protein kinase domain. Residues 583–591 (LGKGGFGIV) and Lys-605 each bind ATP. A Phosphotyrosine modification is found at Tyr-650. Asp-702 acts as the Proton acceptor in catalysis. Phosphoserine is present on Ser-736. Phosphothreonine occurs at positions 737 and 742. Position 750 is a phosphotyrosine (Tyr-750).

This sequence belongs to the protein kinase superfamily. Ser/Thr protein kinase family.

The protein resides in the membrane. It catalyses the reaction L-seryl-[protein] + ATP = O-phospho-L-seryl-[protein] + ADP + H(+). The catalysed reaction is L-threonyl-[protein] + ATP = O-phospho-L-threonyl-[protein] + ADP + H(+). This Arabidopsis thaliana (Mouse-ear cress) protein is Probable LRR receptor-like serine/threonine-protein kinase At1g51810.